Here is a 212-residue protein sequence, read N- to C-terminus: Thymidylate kinase (212 aa).

Alanine 2 bears the N-acetylalanine mark. Residues 16-21 (RAGKST) and arginine 97 each bind ATP. Residues 133 to 157 (LQLQLADAAKRGAFGHERYENGAFQ) are LID. Lysine 169 is subject to N6-acetyllysine. ATP contacts are provided by lysine 182 and arginine 192.

Belongs to the thymidylate kinase family. As to quaternary structure, homodimer. The cofactor is Mg(2+).

It carries out the reaction dTMP + ATP = dTDP + ADP. The protein operates within pyrimidine metabolism; dTTP biosynthesis. In terms of biological role, catalyzes the phosphorylation of thymidine monophosphate (dTMP) to thymidine diphosphate (dTDP), the immediate precursor for the DNA building block dTTP, with ATP as the preferred phosphoryl donor in the presence of Mg(2+). The sequence is that of Thymidylate kinase (DTYMK) from Homo sapiens (Human).